Here is a 284-residue protein sequence, read N- to C-terminus: Pantothenate synthetase (284 aa).

Residue 30-37 (MGNLHDGH) coordinates ATP. The active-site Proton donor is histidine 37. Residue glutamine 61 participates in (R)-pantoate binding. Glutamine 61 lines the beta-alanine pocket. Residue 149-152 (GEKD) coordinates ATP. Glutamine 155 contributes to the (R)-pantoate binding site. Residues valine 178 and 186-189 (LSSR) each bind ATP.

It belongs to the pantothenate synthetase family. As to quaternary structure, homodimer.

Its subcellular location is the cytoplasm. The enzyme catalyses (R)-pantoate + beta-alanine + ATP = (R)-pantothenate + AMP + diphosphate + H(+). Its pathway is cofactor biosynthesis; (R)-pantothenate biosynthesis; (R)-pantothenate from (R)-pantoate and beta-alanine: step 1/1. Functionally, catalyzes the condensation of pantoate with beta-alanine in an ATP-dependent reaction via a pantoyl-adenylate intermediate. The polypeptide is Pantothenate synthetase (Klebsiella pneumoniae subsp. pneumoniae (strain ATCC 700721 / MGH 78578)).